We begin with the raw amino-acid sequence, 285 residues long: NADPH-dependent 7-cyano-7-deazaguanine reductase (285 aa).

Residue 91 to 93 coordinates substrate; that stretch reads IES. 93 to 94 lines the NADPH pocket; that stretch reads SK. C193 acts as the Thioimide intermediate in catalysis. The active-site Proton donor is the D200. Substrate is bound at residue 232-233; it reads HE. 261–262 contributes to the NADPH binding site; it reads RG.

The protein belongs to the GTP cyclohydrolase I family. QueF type 2 subfamily. Homodimer.

Its subcellular location is the cytoplasm. It carries out the reaction 7-aminomethyl-7-carbaguanine + 2 NADP(+) = 7-cyano-7-deazaguanine + 2 NADPH + 3 H(+). It functions in the pathway tRNA modification; tRNA-queuosine biosynthesis. In terms of biological role, catalyzes the NADPH-dependent reduction of 7-cyano-7-deazaguanine (preQ0) to 7-aminomethyl-7-deazaguanine (preQ1). This is NADPH-dependent 7-cyano-7-deazaguanine reductase from Shewanella frigidimarina (strain NCIMB 400).